The primary structure comprises 219 residues: RNA-3 uncharacterized 24.7 kDa protein (219 aa).

This Beta macrocarpa (Beet) protein is RNA-3 uncharacterized 24.7 kDa protein.